The following is a 227-amino-acid chain: Transcription elongation factor A protein-like 2 (227 aa).

2 disordered regions span residues 1–145 and 202–227; these read MEKL…TNKG and FYPRGPREFRGGCRAPRRDTEDIPYV. Basic and acidic residues-rich tracts occupy residues 18-43, 50-82, 90-113, 120-136, and 206-227; these read IDNEEQPPHEGKPEVACILEDKKLEN, TGKRVEEPLKDKEKPESAGKAKGEGKSERKGKS, TEGKPERGGRAEGEGEPDSEREPE, SETRAAGKRPAEDDIPR, and GPREFRGGCRAPRRDTEDIPYV.

The protein belongs to the TFS-II family. TFA subfamily.

The protein localises to the nucleus. In terms of biological role, may be involved in transcriptional regulation. In Homo sapiens (Human), this protein is Transcription elongation factor A protein-like 2 (TCEAL2).